The following is a 158-amino-acid chain: 2-C-methyl-D-erythritol 2,4-cyclodiphosphate synthase (158 aa).

2 residues coordinate a divalent metal cation: D9 and H11. 4-CDP-2-C-methyl-D-erythritol 2-phosphate-binding positions include 9–11 and 35–36; these read DVH and HS. An a divalent metal cation-binding site is contributed by H43. 4-CDP-2-C-methyl-D-erythritol 2-phosphate is bound by residues 57-59, 62-66, 101-107, 133-136, F140, and R143; these read DIG, FPDTD, AQKPKMA, and TTTE.

The protein belongs to the IspF family. In terms of assembly, homotrimer. A divalent metal cation serves as cofactor.

It catalyses the reaction 4-CDP-2-C-methyl-D-erythritol 2-phosphate = 2-C-methyl-D-erythritol 2,4-cyclic diphosphate + CMP. It participates in isoprenoid biosynthesis; isopentenyl diphosphate biosynthesis via DXP pathway; isopentenyl diphosphate from 1-deoxy-D-xylulose 5-phosphate: step 4/6. Functionally, involved in the biosynthesis of isopentenyl diphosphate (IPP) and dimethylallyl diphosphate (DMAPP), two major building blocks of isoprenoid compounds. Catalyzes the conversion of 4-diphosphocytidyl-2-C-methyl-D-erythritol 2-phosphate (CDP-ME2P) to 2-C-methyl-D-erythritol 2,4-cyclodiphosphate (ME-CPP) with a corresponding release of cytidine 5-monophosphate (CMP). The protein is 2-C-methyl-D-erythritol 2,4-cyclodiphosphate synthase of Bacillus velezensis (strain DSM 23117 / BGSC 10A6 / LMG 26770 / FZB42) (Bacillus amyloliquefaciens subsp. plantarum).